The sequence spans 437 residues: Methylenetetrahydrofolate--tRNA-(uracil-5-)-methyltransferase TrmFO (437 aa).

9–14 (GGGLAG) provides a ligand contact to FAD.

Belongs to the MnmG family. TrmFO subfamily. FAD serves as cofactor.

The protein localises to the cytoplasm. It catalyses the reaction uridine(54) in tRNA + (6R)-5,10-methylene-5,6,7,8-tetrahydrofolate + NADH + H(+) = 5-methyluridine(54) in tRNA + (6S)-5,6,7,8-tetrahydrofolate + NAD(+). The catalysed reaction is uridine(54) in tRNA + (6R)-5,10-methylene-5,6,7,8-tetrahydrofolate + NADPH + H(+) = 5-methyluridine(54) in tRNA + (6S)-5,6,7,8-tetrahydrofolate + NADP(+). Functionally, catalyzes the folate-dependent formation of 5-methyl-uridine at position 54 (M-5-U54) in all tRNAs. The protein is Methylenetetrahydrofolate--tRNA-(uracil-5-)-methyltransferase TrmFO of Moorella thermoacetica (strain ATCC 39073 / JCM 9320).